Reading from the N-terminus, the 253-residue chain is LexA repressor (253 aa).

Positions 1–34 (MAIEKKPAGARGSRGSRTVKTLPNGKPDPASLSD) are disordered. The H-T-H motif DNA-binding region spans 56 to 76 (IREIGDAAGLQSTSSVAYQLK). Residues 82-106 (GFLRRDPNKPRAVDVRHLPETESRS) show a composition bias toward basic and acidic residues. Residues 82–127 (GFLRRDPNKPRAVDVRHLPETESRSSKAATQAKSKAPQAGAHDPEL) are disordered. A compositionally biased stretch (low complexity) spans 107–120 (SKAATQAKSKAPQA). Active-site for autocatalytic cleavage activity residues include S177 and K214.

This sequence belongs to the peptidase S24 family. In terms of assembly, homodimer.

It catalyses the reaction Hydrolysis of Ala-|-Gly bond in repressor LexA.. Functionally, represses a number of genes involved in the response to DNA damage (SOS response), including recA and lexA. In the presence of single-stranded DNA, RecA interacts with LexA causing an autocatalytic cleavage which disrupts the DNA-binding part of LexA, leading to derepression of the SOS regulon and eventually DNA repair. This chain is LexA repressor, found in Corynebacterium glutamicum (strain R).